Reading from the N-terminus, the 1070-residue chain is uncharacterized protein (1070 aa).

In terms of domain architecture, UBA spans 477-523; the sequence is LIDTNQLLLRQLQQIVKLGIFNEKKIKEELKANKFNEQVALQILESE.

This is an uncharacterized protein from Sulfolobus islandicus rod-shaped virus 1 (SIRV-1).